The chain runs to 372 residues: Homoserine dehydrogenase (372 aa).

NAD(+) contacts are provided by Val-13, Gly-15, Val-16, and Thr-99. The NADP(+) site is built by Val-16 and Thr-99. Residues Val-16, Thr-99, Ser-100, and Lys-123 each coordinate NADPH. Lys-123 contacts NADP(+). Positions 150, 153, 155, and 157 each coordinate Na(+). 2 residues coordinate NADP(+): Gly-216 and Glu-219. Residues Glu-219 and Asp-230 each contribute to the L-homoserine site. Lys-234 (proton donor) is an active-site residue. Gly-352 lines the NAD(+) pocket. NADP(+) is bound at residue Gly-352. Gly-352 is a binding site for NADPH.

The protein belongs to the homoserine dehydrogenase family. As to quaternary structure, homodimer. It depends on a metal cation as a cofactor.

It catalyses the reaction L-homoserine + NADP(+) = L-aspartate 4-semialdehyde + NADPH + H(+). The catalysed reaction is L-homoserine + NAD(+) = L-aspartate 4-semialdehyde + NADH + H(+). It functions in the pathway amino-acid biosynthesis; L-methionine biosynthesis via de novo pathway; L-homoserine from L-aspartate: step 3/3. Its pathway is amino-acid biosynthesis; L-threonine biosynthesis; L-threonine from L-aspartate: step 3/5. Functionally, catalyzes the conversion of L-aspartate-beta-semialdehyde (L-Asa) to L-homoserine (L-Hse), the third step in the biosynthesis of amino acids that derive from aspartate (the aspartate family of amino acids), including methioinine and threonine, the latter of which is a precursor to isoleucine; production of homoserine leads to a branch-point in the pathway as it can either be O-phosphorylated for processing to threonine, or O-acylated for processing to methionine. The protein is Homoserine dehydrogenase of Paracoccidioides brasiliensis (strain Pb18).